A 261-amino-acid chain; its full sequence is MHSPISGSFTSSTQVHDPIHPANSDGFRETLANVELRTKSPSAECPDKMGCCASKPQASDPNNPSTSSPARPSTSLFRYRTAELAQANADGICVGLTAEWLRNLNSHPSIRMEALVPGSQRHASATVRQKEYENLKVHLRRQGAGPSEADFAAQNTMLQKAGLAPSGKEKVYKVGEPNFPRMLTKITADGSNHLLSLYFAEGGAHTVATSAMDGNTTLFDPNFGEFTVQSDQIDDLFRSLANRYSNPNRQHLTTVTTQKMT.

The span at 1-15 shows a compositional bias: polar residues; it reads MHSPISGSFTSSTQV. Disordered regions lie at residues 1–48 and 54–73; these read MHSP…CPDK and SKPQ…ARPS. The span at 61–73 shows a compositional bias: low complexity; that stretch reads PNNPSTSSPARPS. Catalysis depends on residues C93, H205, and D220.

This sequence belongs to the peptidase C58 family.

Functionally, potential cysteine protease, which may play a central role after invasion of host cell. The polypeptide is Putative cysteine protease YopT-like y4zC (Sinorhizobium fredii (strain NBRC 101917 / NGR234)).